The chain runs to 336 residues: Ornithine carbamoyltransferase, catabolic (336 aa).

Carbamoyl phosphate is bound by residues 62 to 65, Gln89, Arg113, and 140 to 143; these read STRT and HPTQ. L-ornithine-binding positions include Asn172, Asp236, and 240–241; that span reads SM. Carbamoyl phosphate contacts are provided by residues 277–278 and Arg322; that span reads CL.

Belongs to the aspartate/ornithine carbamoyltransferase superfamily. OTCase family.

It localises to the cytoplasm. It carries out the reaction carbamoyl phosphate + L-ornithine = L-citrulline + phosphate + H(+). It functions in the pathway amino-acid degradation; L-arginine degradation via ADI pathway; carbamoyl phosphate from L-arginine: step 2/2. In terms of biological role, reversibly catalyzes the transfer of the carbamoyl group from carbamoyl phosphate (CP) to the N(epsilon) atom of ornithine (ORN) to produce L-citrulline. This Staphylococcus aureus (strain N315) protein is Ornithine carbamoyltransferase, catabolic (arcB).